The sequence spans 195 residues: Putative L(+)-tartrate dehydratase subunit beta (195 aa).

The active site involves H36. Residue K104 coordinates substrate.

The protein belongs to the class-I fumarase family. Heterotetramer of two alpha and two beta subunits.

The enzyme catalyses (2R,3R)-tartrate = oxaloacetate + H2O. The sequence is that of Putative L(+)-tartrate dehydratase subunit beta from Methanocaldococcus jannaschii (strain ATCC 43067 / DSM 2661 / JAL-1 / JCM 10045 / NBRC 100440) (Methanococcus jannaschii).